Reading from the N-terminus, the 133-residue chain is MTMSDPIADMLTRIRNANTAKHDTVDVPASKMKIAIAEILLKEGYIKSFEIEEVGSFKTIHITLKYGKDKNEKVITGLKRISKPGLRVYANSTELPRVLGGLGVAIISTNKGVLTDKAARNANVGGEVLAFIW.

This sequence belongs to the universal ribosomal protein uS8 family. Part of the 30S ribosomal subunit. Contacts proteins S5 and S12.

In terms of biological role, one of the primary rRNA binding proteins, it binds directly to 16S rRNA central domain where it helps coordinate assembly of the platform of the 30S subunit. In Lachnoclostridium phytofermentans (strain ATCC 700394 / DSM 18823 / ISDg) (Clostridium phytofermentans), this protein is Small ribosomal subunit protein uS8.